An 83-amino-acid polypeptide reads, in one-letter code: Gas vesicle protein G2 (83 aa).

Belongs to the gas vesicle GvpG family. In terms of assembly, gvpF to GvpM interact with each other in vitro, and may form multi-subunit complex(es).

The protein resides in the gas vesicle. Proteins GvpF to GvpM might be involved in nucleating gas vesicle formation. A minor component of the gas vesicle. Gas vesicles are hollow, gas filled proteinaceous nanostructures found in several microbial planktonic microorganisms. They allow positioning of halobacteria at the optimal depth for growth in the poorly aerated, shallow brine pools of their habitat. In terms of biological role, expression of 2 c-vac DNA fragments containing 2 divergently transcribed regions (gvpE-gvpF-gvpG-gvpH-gvpI-gvpJ-gvpK-gvpL-gvpM and gvpA-gvpC-gvpN-gvpO) allows H.volcanii to produce gas vesicles. The polypeptide is Gas vesicle protein G2 (Halobacterium salinarum (strain ATCC 700922 / JCM 11081 / NRC-1) (Halobacterium halobium)).